Here is a 300-residue protein sequence, read N- to C-terminus: TLR adapter interacting with SLC15A4 on the lysosome (300 aa).

Positions 289–293 (SLHIS) match the pLxIS motif motif. The residue at position 293 (Ser293) is a Phosphoserine.

In terms of assembly, interacts (via pLxIS motif) with IRF5; leading to IRF5 activation. Interacts with SLC15A4; leading to its recruitment to endolysosome. The phosphorylated pLxIS motif constitutes an IRF5-binding motif, leading to recruitment of the transcription factor IRF5 to induce type-I interferons and other cytokines.

It localises to the lysosome membrane. It is found in the endosome membrane. The protein resides in the nucleus. Its subcellular location is the cytoplasm. In terms of biological role, innate immune adapter that mediates the recruitment and activation of IRF5 downstream of endolysosomal toll-like receptors TLR7, TLR8 and TLR9. Following recruitment to endolysosome by SLC15A4 downstream of TLR7, TLR8 and TLR9, specifically recruits IRF5 transcription factor via its pLxIS motif, leading to IRF5 activation and subsequent expression of type I interferons. Plays a role in the regulation of endolysosomal pH in immune cells such as B-cells, dendritic cells and monocytes. This is TLR adapter interacting with SLC15A4 on the lysosome from Bos taurus (Bovine).